Here is a 563-residue protein sequence, read N- to C-terminus: Arginine--tRNA ligase (563 aa).

The short motif at 121–131 is the 'HIGH' region element; sequence PNIAKPFSIGH.

Belongs to the class-I aminoacyl-tRNA synthetase family. As to quaternary structure, monomer.

It is found in the cytoplasm. It carries out the reaction tRNA(Arg) + L-arginine + ATP = L-arginyl-tRNA(Arg) + AMP + diphosphate. In Streptococcus pneumoniae (strain Taiwan19F-14), this protein is Arginine--tRNA ligase.